Reading from the N-terminus, the 225-residue chain is uncharacterized protein (225 aa).

This is an uncharacterized protein from Bacillus subtilis (strain 168).